The sequence spans 138 residues: uncharacterized protein (138 aa).

Positions 1 to 73 (MCSAGQLLGG…NHTGEPVGDD (73 aa)) are disordered. Residues 7–18 (LLGGGGGGGGSG) are compositionally biased toward gly residues. Residues 19-29 (GERDEDRDALA) show a composition bias toward basic and acidic residues. A compositionally biased stretch (low complexity) spans 30–43 (ERAAAGTEQESGAS). A helical membrane pass occupies residues 106 to 126 (VIVIFFWVMLWFLGLPAFGLV).

Belongs to the FAM241 family.

The protein localises to the membrane. This is an uncharacterized protein from Bos taurus (Bovine).